The sequence spans 256 residues: Adenylate kinase (256 aa).

An ATP-binding site is contributed by 49 to 54; that stretch reads GAGKGT. Residues 69–98 form an NMP region; the sequence is ATGDMLRDQVEKKTPLGIAAKKIMDAGGLV. Residues Thr-70, Arg-75, 96–98, 125–128, and Gln-132 contribute to the AMP site; these read GLV and GFPR. Positions 166-203 are LID; it reads GRLIHPASGRSYHKIFNPPKKAGIDDLTGEPLIQRSDD. Residues Arg-167 and 176–177 each bind ATP; that span reads SY. Residues Arg-200 and Arg-211 each coordinate AMP. ATP is bound at residue Gln-239.

It belongs to the adenylate kinase family. AK2 subfamily. As to quaternary structure, monomer.

It is found in the cytoplasm. The protein localises to the cytosol. Its subcellular location is the mitochondrion intermembrane space. The enzyme catalyses AMP + ATP = 2 ADP. Catalyzes the reversible transfer of the terminal phosphate group between ATP and AMP. Plays an important role in cellular energy homeostasis and in adenine nucleotide metabolism. Adenylate kinase activity is critical for regulation of the phosphate utilization and the AMP de novo biosynthesis pathways. This is Adenylate kinase from Coprinopsis cinerea (strain Okayama-7 / 130 / ATCC MYA-4618 / FGSC 9003) (Inky cap fungus).